The primary structure comprises 305 residues: Tyrosine recombinase XerC (305 aa).

The region spanning 1–93 (MVLDGFAAHF…SWRQYCVWLV (93 aa)) is the Core-binding (CB) domain. The region spanning 114–294 (RVPKALPQEW…DFDHIARLYD (181 aa)) is the Tyr recombinase domain. Active-site residues include Arg155, Lys179, His246, Arg249, and His272. The O-(3'-phospho-DNA)-tyrosine intermediate role is filled by Tyr281.

This sequence belongs to the 'phage' integrase family. XerC subfamily. In terms of assembly, forms a cyclic heterotetrameric complex composed of two molecules of XerC and two molecules of XerD.

The protein resides in the cytoplasm. Its function is as follows. Site-specific tyrosine recombinase, which acts by catalyzing the cutting and rejoining of the recombining DNA molecules. The XerC-XerD complex is essential to convert dimers of the bacterial chromosome into monomers to permit their segregation at cell division. It also contributes to the segregational stability of plasmids. The sequence is that of Tyrosine recombinase XerC from Neisseria meningitidis serogroup C / serotype 2a (strain ATCC 700532 / DSM 15464 / FAM18).